A 157-amino-acid polypeptide reads, in one-letter code: uncharacterized protein (157 aa).

Residues 42–64 form a helical membrane-spanning segment; it reads SCIRLIVMFICVAMITCPNSLRF.

It localises to the membrane. This is an uncharacterized protein from Saccharomyces cerevisiae (strain ATCC 204508 / S288c) (Baker's yeast).